The sequence spans 654 residues: Fimbrin-2 (654 aa).

Calponin-homology (CH) domains follow at residues 124 to 241 (DSEK…KIQL), 269 to 372 (LPPE…QHRN), 394 to 500 (SREE…RYNI), and 515 to 623 (EITD…YWTL). Actin-binding regions lie at residues 124–372 (DSEK…QHRN) and 394–623 (SREE…YWTL).

In terms of assembly, interacts with F-actin.

It localises to the cytoplasm. Its subcellular location is the cytoskeleton. Cross-links actin filaments (F-actin). Stabilizes and prevents F-actin depolymerization mediated by profilin. May regulate actin cytoarchitecture, cell cycle, cell division, cell elongation and cytoplasmic tractus. The sequence is that of Fimbrin-2 from Arabidopsis thaliana (Mouse-ear cress).